We begin with the raw amino-acid sequence, 185 residues long: Peptidyl-tRNA hydrolase (185 aa).

Tyr14 is a binding site for tRNA. His19 acts as the Proton acceptor in catalysis. TRNA-binding residues include Tyr64, Asn66, and Asn112.

This sequence belongs to the PTH family. As to quaternary structure, monomer.

It is found in the cytoplasm. It catalyses the reaction an N-acyl-L-alpha-aminoacyl-tRNA + H2O = an N-acyl-L-amino acid + a tRNA + H(+). Functionally, hydrolyzes ribosome-free peptidyl-tRNAs (with 1 or more amino acids incorporated), which drop off the ribosome during protein synthesis, or as a result of ribosome stalling. Catalyzes the release of premature peptidyl moieties from peptidyl-tRNA molecules trapped in stalled 50S ribosomal subunits, and thus maintains levels of free tRNAs and 50S ribosomes. This Pediococcus pentosaceus (strain ATCC 25745 / CCUG 21536 / LMG 10740 / 183-1w) protein is Peptidyl-tRNA hydrolase.